The primary structure comprises 202 residues: Imidazoleglycerol-phosphate dehydratase (202 aa).

It belongs to the imidazoleglycerol-phosphate dehydratase family.

Its subcellular location is the cytoplasm. The enzyme catalyses D-erythro-1-(imidazol-4-yl)glycerol 3-phosphate = 3-(imidazol-4-yl)-2-oxopropyl phosphate + H2O. It functions in the pathway amino-acid biosynthesis; L-histidine biosynthesis; L-histidine from 5-phospho-alpha-D-ribose 1-diphosphate: step 6/9. This chain is Imidazoleglycerol-phosphate dehydratase, found in Brucella abortus (strain S19).